Here is a 371-residue protein sequence, read N- to C-terminus: 3-isopropylmalate dehydrogenase B (371 aa).

79 to 93 (GSKVDHIRRGLDGPE) is an NAD(+) binding site. 4 residues coordinate substrate: Arg-100, Arg-110, Arg-142, and Asp-229. 3 residues coordinate Mg(2+): Asp-229, Asp-254, and Asp-258. Residue 296 to 308 (GSAPTIAGKNIAN) participates in NAD(+) binding.

This sequence belongs to the isocitrate and isopropylmalate dehydrogenases family. As to quaternary structure, homodimer. The cofactor is Mg(2+). Mn(2+) serves as cofactor.

Its subcellular location is the cytoplasm. The catalysed reaction is (2R,3S)-3-isopropylmalate + NAD(+) = 4-methyl-2-oxopentanoate + CO2 + NADH. It participates in amino-acid biosynthesis; L-leucine biosynthesis; L-leucine from 3-methyl-2-oxobutanoate: step 3/4. Functionally, catalyzes the oxidation of 3-carboxy-2-hydroxy-4-methylpentanoate (3-isopropylmalate) to 3-carboxy-4-methyl-2-oxopentanoate. The product decarboxylates to 4-methyl-2 oxopentanoate. The chain is 3-isopropylmalate dehydrogenase B (leu2B) from Aspergillus niger.